The sequence spans 1305 residues: ABC transporter FPSE_09185 (1305 aa).

N-linked (GlcNAc...) asparagine glycosylation occurs at Asn28. 6 consecutive transmembrane segments (helical) span residues 44 to 64 (FCVYVVGALASIGVGVTMPLM), 99 to 119 (LYIVGLFLGRWLLNSINKFCF), 172 to 192 (RLGTFVTYVSTIIAAIAVAFT), 199 to 219 (IVSASLLVYIAIIIAIVVPIY), 277 to 297 (IIGAQTGLVFFGIFGVFGLAF), and 312 to 332 (VGVVIIVLTSVMLILFAFSYL). Residues 48–348 (VVGALASIGV…ISQAMVAATE (301 aa)) enclose the ABC transmembrane type-1 1 domain. The 292-residue stretch at 372–663 (LIFKDVTFEY…ENGVYYSLVE (292 aa)) folds into the ABC transporter 1 domain. 407-414 (GPSGSGKS) lines the ATP pocket. Positions 434 to 454 (EAATPRSSKEGERDNHDERKY) are disordered. Over residues 440 to 454 (SSKEGERDNHDERKY) the composition is skewed to basic and acidic residues. N-linked (GlcNAc...) asparagine glycans are attached at residues Asn468, Asn507, and Asn525. The next 6 helical transmembrane spans lie at 737–757 (FLLITIASMGVGAATPLQAWL), 780–800 (GFMWLALAGGVGVAYFFQCWI), 851–873 (GVFGLNLASATSSVFTIVGCLII), 877–899 (FGWKLGLVGLCVTVPIMMVSGFW), 964–984 (AVIFGFAESATLGCQALILWY), and 999–1019 (FMVSYMAIINGVEYAGQILGV). Residues 738–1025 (LLITIASMGV…ILGVAPSAAQ (288 aa)) enclose the ABC transmembrane type-1 2 domain. A disordered region spans residues 1038–1057 (DSNRSSQEAEKSGPTVEDTD). N-linked (GlcNAc...) asparagine glycans are attached at residues Asn1040, Asn1066, and Asn1075. In terms of domain architecture, ABC transporter 2 spans 1062–1300 (IELCNVSFKY…RGIYWDMCQT (239 aa)). Residue 1096–1103 (GPSGCGKT) participates in ATP binding. Asn1125 carries N-linked (GlcNAc...) asparagine glycosylation.

It belongs to the ABC transporter superfamily. ABCB family. Multidrug resistance exporter (TC 3.A.1.201) subfamily.

It localises to the membrane. Functionally, ABC transporter; part of the gene cluster that mediates the biosynthesis of the lipopeptides W493 A and B. W493 A and B consist of six amino acid residues D-allo-thr, L-Ala, D-Ala, L-Gln, D-Tyr, and L-Val/L-Ile linked to a 3-hydroxy-4-methyltetradecanoic acid polyketide chain. May be involved in excretion or internal transport of W493 A and B. This Fusarium pseudograminearum (strain CS3096) (Wheat and barley crown-rot fungus) protein is ABC transporter FPSE_09185.